The following is a 164-amino-acid chain: Phosphopantetheine adenylyltransferase (164 aa).

Substrate is bound at residue Ser9. ATP-binding positions include Ser9 to Phe10 and His17. Substrate is bound by residues Lys41, Leu73, and Arg87. Residues Gly88–Arg90, Glu98, and Tyr123–Ser129 each bind ATP.

This sequence belongs to the bacterial CoaD family. As to quaternary structure, homohexamer. The cofactor is Mg(2+).

Its subcellular location is the cytoplasm. The catalysed reaction is (R)-4'-phosphopantetheine + ATP + H(+) = 3'-dephospho-CoA + diphosphate. It functions in the pathway cofactor biosynthesis; coenzyme A biosynthesis; CoA from (R)-pantothenate: step 4/5. Its function is as follows. Reversibly transfers an adenylyl group from ATP to 4'-phosphopantetheine, yielding dephospho-CoA (dPCoA) and pyrophosphate. The sequence is that of Phosphopantetheine adenylyltransferase from Dictyoglomus thermophilum (strain ATCC 35947 / DSM 3960 / H-6-12).